The chain runs to 553 residues: Peroxiredoxin-2A (553 aa).

The Thioredoxin domain occupies 4–160 (IDVGDFVPDG…LMKMTTTTMS (157 aa)). The active-site Cysteine sulfenic acid (-SOH) intermediate is the C51. The F-box domain maps to 156 to 201 (TTTMSNLPTDLLEEIISRVPRKYMRAVRLTCKRWNGMFKSQSFTKM).

The protein belongs to the peroxiredoxin family. Prx5 subfamily. In terms of assembly, monomer.

It carries out the reaction [glutaredoxin]-dithiol + a hydroperoxide = [glutaredoxin]-disulfide + an alcohol + H2O. In terms of biological role, thiol-specific peroxidase that catalyzes the reduction of hydrogen peroxide and organic hydroperoxides to water and alcohols, respectively. Plays a role in cell protection against oxidative stress by detoxifying peroxides. May be involved in intracellular redox signaling. The polypeptide is Peroxiredoxin-2A (PRXIIA) (Arabidopsis thaliana (Mouse-ear cress)).